We begin with the raw amino-acid sequence, 436 residues long: Cysteine--tRNA ligase (436 aa).

A Zn(2+)-binding site is contributed by Cys-24. A 'HIGH' region motif is present at residues 26-36 (PTVYNHIHIGN). Residues Cys-202, His-227, and Glu-231 each contribute to the Zn(2+) site. The 'KMSKS' region motif lies at 259–263 (KMSKS). Residue Lys-262 coordinates ATP.

It belongs to the class-I aminoacyl-tRNA synthetase family. As to quaternary structure, monomer. The cofactor is Zn(2+).

The protein resides in the cytoplasm. It carries out the reaction tRNA(Cys) + L-cysteine + ATP = L-cysteinyl-tRNA(Cys) + AMP + diphosphate. This Ureaplasma parvum serovar 3 (strain ATCC 700970) protein is Cysteine--tRNA ligase.